Consider the following 266-residue polypeptide: Signal peptidase I (266 aa).

The Cytoplasmic portion of the chain corresponds to 1 to 20 (MQTDNTKSNTNKTAKQEWGS). A helical membrane pass occupies residues 21–41 (FAFVICIALLIRILIMEPFTV). The Periplasmic segment spans residues 42–266 (PTGSMKATIL…IFRNLYNTDA (225 aa)). Catalysis depends on residues S45 and K108.

The protein belongs to the peptidase S26 family.

The protein localises to the cell inner membrane. The catalysed reaction is Cleavage of hydrophobic, N-terminal signal or leader sequences from secreted and periplasmic proteins.. Functionally, complements E.coli mutants temperature-sensitive for LepB function. The chain is Signal peptidase I (lepB) from Rickettsia rickettsii (strain Sheila Smith).